The following is a 22-amino-acid chain: Sex pheromone inhibitor determinant (22 aa).

Residues 1-14 (MSKRAMKKIIPLIT) constitute a propeptide that is removed on maturation.

It is found in the secreted. Acts as a competitive inhibitor of the CAD1 pheromone. This Enterococcus faecalis (strain ATCC 700802 / V583) protein is Sex pheromone inhibitor determinant (iad).